Consider the following 305-residue polypeptide: tRNA pseudouridine synthase B (305 aa).

Asp-38 functions as the Nucleophile in the catalytic mechanism.

Belongs to the pseudouridine synthase TruB family. Type 1 subfamily.

It catalyses the reaction uridine(55) in tRNA = pseudouridine(55) in tRNA. In terms of biological role, responsible for synthesis of pseudouridine from uracil-55 in the psi GC loop of transfer RNAs. The polypeptide is tRNA pseudouridine synthase B (Latilactobacillus sakei subsp. sakei (strain 23K) (Lactobacillus sakei subsp. sakei)).